We begin with the raw amino-acid sequence, 178 residues long: Fatty-acid and retinol-binding protein 1 (178 aa).

The N-terminal stretch at 1 to 16 (MYHQLILMALIGVIMA) is a signal peptide. N-linked (GlcNAc...) asparagine glycosylation is found at Asn44 and Asn75. Coiled-coil stretches lie at residues 67-89 (DAALEALKNKSDKLYQKAVELRN) and 122-154 (QKLDMEKLKQAARDIIAKYEALNEETKEELKAT). Asn157 carries N-linked (GlcNAc...) asparagine glycosylation.

It belongs to the fatty-acid and retinol-binding protein (FARBP) family. In terms of processing, N-glycosylated.

The protein resides in the secreted. Functionally, binds retinol and different fatty acids. This chain is Fatty-acid and retinol-binding protein 1, found in Onchocerca ochengi (Filarial nematode worm).